Here is a 659-residue protein sequence, read N- to C-terminus: tRNA uridine 5-carboxymethylaminomethyl modification enzyme MnmG (659 aa).

Residue 13 to 18 coordinates FAD; the sequence is GGGHAG. Residue 281–295 participates in NAD(+) binding; sequence GPRYCPSVEDKINRF.

It belongs to the MnmG family. In terms of assembly, homodimer. Heterotetramer of two MnmE and two MnmG subunits. FAD is required as a cofactor.

The protein resides in the cytoplasm. NAD-binding protein involved in the addition of a carboxymethylaminomethyl (cmnm) group at the wobble position (U34) of certain tRNAs, forming tRNA-cmnm(5)s(2)U34. This is tRNA uridine 5-carboxymethylaminomethyl modification enzyme MnmG from Delftia acidovorans (strain DSM 14801 / SPH-1).